We begin with the raw amino-acid sequence, 99 residues long: Aspartyl/glutamyl-tRNA(Asn/Gln) amidotransferase subunit C (99 aa).

Belongs to the GatC family. As to quaternary structure, heterotrimer of A, B and C subunits.

The enzyme catalyses L-glutamyl-tRNA(Gln) + L-glutamine + ATP + H2O = L-glutaminyl-tRNA(Gln) + L-glutamate + ADP + phosphate + H(+). The catalysed reaction is L-aspartyl-tRNA(Asn) + L-glutamine + ATP + H2O = L-asparaginyl-tRNA(Asn) + L-glutamate + ADP + phosphate + 2 H(+). Functionally, allows the formation of correctly charged Asn-tRNA(Asn) or Gln-tRNA(Gln) through the transamidation of misacylated Asp-tRNA(Asn) or Glu-tRNA(Gln) in organisms which lack either or both of asparaginyl-tRNA or glutaminyl-tRNA synthetases. The reaction takes place in the presence of glutamine and ATP through an activated phospho-Asp-tRNA(Asn) or phospho-Glu-tRNA(Gln). The chain is Aspartyl/glutamyl-tRNA(Asn/Gln) amidotransferase subunit C from Cupriavidus necator (strain ATCC 17699 / DSM 428 / KCTC 22496 / NCIMB 10442 / H16 / Stanier 337) (Ralstonia eutropha).